Here is a 439-residue protein sequence, read N- to C-terminus: Glycosyl hydrolase DigH (439 aa).

Positions 1-27 (MDICSRNEKLAIRRPAILVALALLLCS) are cleaved as a signal peptide. The N-palmitoyl cysteine moiety is linked to residue C28. Residue C28 is the site of S-diacylglycerol cysteine attachment. The disordered stretch occupies residues 34-54 (ESMVTPPAGSKPPATTQQSSQ).

Belongs to the glycosyl hydrolase-like 10 (GHL10) family.

It is found in the cell outer membrane. Divisome-localized glycosyl hydrolase that cleaves peptide-free (denuded) peptidoglycans. The chain is Glycosyl hydrolase DigH from Escherichia coli O6:H1 (strain CFT073 / ATCC 700928 / UPEC).